We begin with the raw amino-acid sequence, 407 residues long: Protein arginine N-methyltransferase 2 (407 aa).

The RMT2 domain occupies 186-407 (TAADQATYLK…YYYHPEIRFA (222 aa)). S-adenosyl-L-methionine-binding positions include Tyr-193, Met-223, 246 to 251 (FGMGII), 267 to 269 (EAH), 294 to 295 (WQ), and Asp-315.

It belongs to the class I-like SAM-binding methyltransferase superfamily. RMT2 methyltransferase family. Monomer.

Its subcellular location is the cytoplasm. The protein resides in the nucleus. Functionally, S-adenosyl-L-methionine-dependent protein-arginine N-methyltransferase that methylates the delta-nitrogen atom of arginine residues to form N5-methylarginine (type IV) in target proteins. Monomethylates ribosomal protein L12. This chain is Protein arginine N-methyltransferase 2, found in Kluyveromyces lactis (strain ATCC 8585 / CBS 2359 / DSM 70799 / NBRC 1267 / NRRL Y-1140 / WM37) (Yeast).